We begin with the raw amino-acid sequence, 123 residues long: uncharacterized protein (123 aa).

Residues 36–76 (VDRQENKKEFLSAEEAREKFKELINQVRSWKEQMSTLSKYA) are a coiled coil.

This is an uncharacterized protein from Aquifex aeolicus (strain VF5).